A 76-amino-acid chain; its full sequence is Defensin-like protein 71 (76 aa).

Positions 1–22 (MAMTQVFVIFILLATSLCNSNA) are cleaved as a signal peptide. 4 disulfide bridges follow: Cys36/Cys74, Cys40/Cys63, Cys49/Cys72, and Cys53/Cys73.

The protein belongs to the DEFL family.

Its subcellular location is the secreted. The sequence is that of Defensin-like protein 71 (LCR84) from Arabidopsis thaliana (Mouse-ear cress).